Here is a 273-residue protein sequence, read N- to C-terminus: MKNIQIIVASDSVGETAELVARACISQFNPKQCESEISRYPYIEALENVDEVISVAKDTEAIVVYTLVKPEIRKYMEAKLAEFKIKAVDIMGPLMNILLDQIDEKPYFEPGLVHQLDEAYFKKIDAIEFAVKYDDGKDPKGLFKADIVLLGISRTSKTPLSQYLAHKSYKVMNIPIVPEVTPPDDLFNIDSSKCIALKISEEKLNRIRKERLRQLGLGESARYATEQRIEEELNYFHELVDKIGCPIIDVSDKAIEETANDIISLIEQNNFKN.

151–158 is an ADP binding site; that stretch reads GISRTSKT.

The protein belongs to the pyruvate, phosphate/water dikinase regulatory protein family. PDRP subfamily.

The enzyme catalyses N(tele)-phospho-L-histidyl/L-threonyl-[pyruvate, phosphate dikinase] + ADP = N(tele)-phospho-L-histidyl/O-phospho-L-threonyl-[pyruvate, phosphate dikinase] + AMP + H(+). It carries out the reaction N(tele)-phospho-L-histidyl/O-phospho-L-threonyl-[pyruvate, phosphate dikinase] + phosphate + H(+) = N(tele)-phospho-L-histidyl/L-threonyl-[pyruvate, phosphate dikinase] + diphosphate. Functionally, bifunctional serine/threonine kinase and phosphorylase involved in the regulation of the pyruvate, phosphate dikinase (PPDK) by catalyzing its phosphorylation/dephosphorylation. The protein is Putative pyruvate, phosphate dikinase regulatory protein 2 of Staphylococcus saprophyticus subsp. saprophyticus (strain ATCC 15305 / DSM 20229 / NCIMB 8711 / NCTC 7292 / S-41).